Here is a 340-residue protein sequence, read N- to C-terminus: Selenide, water dikinase (340 aa).

Residue Sec17 is part of the active site. A non-standard amino acid (selenocysteine) is located at residue Sec17. Residues Lys20 and 45–47 (NNE) each bind ATP. Residue Asp48 participates in Mg(2+) binding. Residues Asp65, Asp88, and 136 to 138 (GHT) each bind ATP. Asp88 is a binding site for Mg(2+). Asp224 provides a ligand contact to Mg(2+).

It belongs to the selenophosphate synthase 1 family. Class I subfamily. As to quaternary structure, homodimer. Requires Mg(2+) as cofactor.

The enzyme catalyses hydrogenselenide + ATP + H2O = selenophosphate + AMP + phosphate + 2 H(+). In terms of biological role, synthesizes selenophosphate from selenide and ATP. The sequence is that of Selenide, water dikinase from Campylobacter jejuni subsp. jejuni serotype O:2 (strain ATCC 700819 / NCTC 11168).